Here is a 97-residue protein sequence, read N- to C-terminus: NADH-ubiquinone oxidoreductase chain 4L (97 aa).

3 helical membrane-spanning segments follow: residues 1 to 21, 23 to 43, and 60 to 80; these read MALL…ILLN, LHFL…FIGI, and LLLL…MVAL.

It belongs to the complex I subunit 4L family.

It localises to the mitochondrion membrane. The catalysed reaction is a ubiquinone + NADH + 5 H(+)(in) = a ubiquinol + NAD(+) + 4 H(+)(out). Its function is as follows. Core subunit of the mitochondrial membrane respiratory chain NADH dehydrogenase (Complex I) that is believed to belong to the minimal assembly required for catalysis. Complex I functions in the transfer of electrons from NADH to the respiratory chain. The immediate electron acceptor for the enzyme is believed to be ubiquinone. The polypeptide is NADH-ubiquinone oxidoreductase chain 4L (ND4L) (Paracentrotus lividus (Common sea urchin)).